The primary structure comprises 162 residues: Beta-carotene hydroxylase (162 aa).

In terms of domain architecture, Fatty acid hydroxylase spans 8-135 (VATVLVMELT…GRDHCVSFGF (128 aa)).

This sequence belongs to the sterol desaturase family.

The enzyme catalyses all-trans-beta-carotene + 4 reduced [2Fe-2S]-[ferredoxin] + 2 O2 + 4 H(+) = all-trans-zeaxanthin + 4 oxidized [2Fe-2S]-[ferredoxin] + 2 H2O. Its pathway is carotenoid biosynthesis; astaxanthin biosynthesis. Functionally, catalyzes the hydroxylation reaction from beta-carotene to zeaxanthin via beta-cryptoxanthin. In Paracoccus sp. (strain PC1) (Alcaligenes sp. (strain PC1)), this protein is Beta-carotene hydroxylase (crtZ).